A 666-amino-acid chain; its full sequence is Probable potassium transport system protein Kup (666 aa).

The next 12 helical transmembrane spans lie at 16 to 36 (GFII…LYTM), 58 to 78 (ISLI…LIAL), 98 to 118 (ISPW…SDGA), 141 to 161 (IYQN…VLFG), 165 to 185 (FGTG…FSFL), 221 to 241 (IFIL…YSDL), 253 to 273 (WPFV…WILA), 299 to 319 (LATL…FTLI), 343 to 363 (LYIP…VLAF), 373 to 393 (YGLA…YYLI), 399 to 419 (PILA…FFLA), and 424 to 444 (FMHG…VMFI).

The protein belongs to the HAK/KUP transporter (TC 2.A.72) family.

Its subcellular location is the cell membrane. It carries out the reaction K(+)(in) + H(+)(in) = K(+)(out) + H(+)(out). In terms of biological role, transport of potassium into the cell. Likely operates as a K(+):H(+) symporter. This chain is Probable potassium transport system protein Kup, found in Streptococcus pyogenes serotype M28 (strain MGAS6180).